Reading from the N-terminus, the 332-residue chain is Adenosine receptor A2b (332 aa).

Residues 1–8 (MQLETQDA) lie on the Extracellular side of the membrane. The chain crosses the membrane as a helical span at residues 9-33 (LYVALELVIAALAVAGNVLVCAAVG). Topologically, residues 34-43 (ASSALQTPTN) are cytoplasmic. A helical membrane pass occupies residues 44–67 (YFLVSLATADVAVGLFAIPFAITI). Topologically, residues 68-78 (SLGFCTDFHSC) are extracellular. A disulfide bond links Cys-78 and Cys-171. A helical membrane pass occupies residues 79–101 (LFLACFVLVLTQSSIFSLLAVAV). The Cytoplasmic portion of the chain corresponds to 102 to 121 (DRYLAIRVPLRYKGLVTGTR). A helical transmembrane segment spans residues 122–144 (ARGIIAVLWVLAFGIGLTPFLGW). Over 145–178 (NSKDRATSNCTEPGDGITNKSCCPVKCLFENVVP) the chain is Extracellular. N-linked (GlcNAc...) asparagine glycosylation is found at Asn-153 and Asn-163. Residue Glu-174 participates in adenosine binding. Residues 179 to 203 (MSYMVYFNFFGCVLPPLLIMMVIYI) traverse the membrane as a helical segment. Over 204–235 (KIFMVACKQLQHMELMEHSRTTLQREIHAAKS) the chain is Cytoplasmic. A helical transmembrane segment spans residues 236–259 (LAMIVGIFALCWLPVHAINCITLF). An adenosine-binding site is contributed by Asn-254. Topologically, residues 260–267 (HPALAKDK) are extracellular. Residues 268-291 (PKWVMNVAILLSHANSVVNPIVYA) traverse the membrane as a helical segment. 2 residues coordinate adenosine: Ser-279 and His-280. Over 292–332 (YRNRDFRYSFHRIISRYVLCQTDTKGGSGQAGGQSTFSLSL) the chain is Cytoplasmic. Cys-311 is lipidated: S-palmitoyl cysteine.

It belongs to the G-protein coupled receptor 1 family.

The protein resides in the cell membrane. Receptor for adenosine. The activity of this receptor is mediated by G proteins which activate adenylyl cyclase. The protein is Adenosine receptor A2b (Adora2b) of Rattus norvegicus (Rat).